Reading from the N-terminus, the 283-residue chain is Spore coat polysaccharide biosynthesis protein SpsK (283 aa).

This sequence belongs to the dTDP-4-dehydrorhamnose reductase family.

The protein operates within spore coat biogenesis; spore coat polysaccharide biosynthesis. The polypeptide is Spore coat polysaccharide biosynthesis protein SpsK (spsK) (Bacillus subtilis (strain 168)).